Consider the following 348-residue polypeptide: Tetraacyldisaccharide 4'-kinase (348 aa).

65–72 (VAGGAGKT) serves as a coordination point for ATP. The segment at 89–117 (PGIVSRGHGSREREARPVSADSTAQSVGD) is disordered.

The protein belongs to the LpxK family.

It carries out the reaction a lipid A disaccharide + ATP = a lipid IVA + ADP + H(+). Its pathway is glycolipid biosynthesis; lipid IV(A) biosynthesis; lipid IV(A) from (3R)-3-hydroxytetradecanoyl-[acyl-carrier-protein] and UDP-N-acetyl-alpha-D-glucosamine: step 6/6. Transfers the gamma-phosphate of ATP to the 4'-position of a tetraacyldisaccharide 1-phosphate intermediate (termed DS-1-P) to form tetraacyldisaccharide 1,4'-bis-phosphate (lipid IVA). The sequence is that of Tetraacyldisaccharide 4'-kinase from Leptothrix cholodnii (strain ATCC 51168 / LMG 8142 / SP-6) (Leptothrix discophora (strain SP-6)).